A 291-amino-acid polypeptide reads, in one-letter code: Light-independent protochlorophyllide reductase iron-sulfur ATP-binding protein (291 aa).

ATP is bound by residues 10–15 (GIGKST) and Lys39. Ser14 contacts Mg(2+). Residues Cys95 and Cys129 each coordinate [4Fe-4S] cluster. Residue 180–181 (NR) coordinates ATP.

It belongs to the NifH/BchL/ChlL family. Homodimer. Protochlorophyllide reductase is composed of three subunits; ChlL, ChlN and ChlB. [4Fe-4S] cluster is required as a cofactor.

It localises to the plastid. It is found in the chloroplast. It carries out the reaction chlorophyllide a + oxidized 2[4Fe-4S]-[ferredoxin] + 2 ADP + 2 phosphate = protochlorophyllide a + reduced 2[4Fe-4S]-[ferredoxin] + 2 ATP + 2 H2O. It functions in the pathway porphyrin-containing compound metabolism; chlorophyll biosynthesis (light-independent). Functionally, component of the dark-operative protochlorophyllide reductase (DPOR) that uses Mg-ATP and reduced ferredoxin to reduce ring D of protochlorophyllide (Pchlide) to form chlorophyllide a (Chlide). This reaction is light-independent. The L component serves as a unique electron donor to the NB-component of the complex, and binds Mg-ATP. The polypeptide is Light-independent protochlorophyllide reductase iron-sulfur ATP-binding protein (Pinus thunbergii (Japanese black pine)).